The following is a 327-amino-acid chain: Flotillin-like protein FloA (327 aa).

2 consecutive transmembrane segments (helical) span residues 8 to 28 and 29 to 49; these read VLLITGGILIFLAIFFTLVPI and PLWISSLAAGVRVSIFTLVGM.

It belongs to the flotillin-like FloA family. As to quaternary structure, homooligomerizes.

The protein localises to the cell membrane. It is found in the membrane raft. Its function is as follows. Found in functional membrane microdomains (FMM) that may be equivalent to eukaryotic membrane rafts. FMMs are highly dynamic and increase in number as cells age. Flotillins are thought to be important factors in membrane fluidity. In Exiguobacterium sibiricum (strain DSM 17290 / CCUG 55495 / CIP 109462 / JCM 13490 / 255-15), this protein is Flotillin-like protein FloA.